Consider the following 394-residue polypeptide: 1-deoxy-D-xylulose 5-phosphate reductoisomerase (394 aa).

Residues threonine 10, glycine 11, serine 12, isoleucine 13, glycine 38, arginine 39, asparagine 40, and asparagine 123 each coordinate NADPH. Lysine 124 is a 1-deoxy-D-xylulose 5-phosphate binding site. Residue glutamate 125 coordinates NADPH. Aspartate 149 is a Mn(2+) binding site. Serine 150, glutamate 151, serine 175, and histidine 198 together coordinate 1-deoxy-D-xylulose 5-phosphate. Glutamate 151 is a binding site for Mn(2+). Glycine 204 is a binding site for NADPH. Serine 211, asparagine 216, lysine 217, and glutamate 220 together coordinate 1-deoxy-D-xylulose 5-phosphate. Glutamate 220 contributes to the Mn(2+) binding site.

It belongs to the DXR family. The cofactor is Mg(2+). Requires Mn(2+) as cofactor.

The catalysed reaction is 2-C-methyl-D-erythritol 4-phosphate + NADP(+) = 1-deoxy-D-xylulose 5-phosphate + NADPH + H(+). It participates in isoprenoid biosynthesis; isopentenyl diphosphate biosynthesis via DXP pathway; isopentenyl diphosphate from 1-deoxy-D-xylulose 5-phosphate: step 1/6. Functionally, catalyzes the NADPH-dependent rearrangement and reduction of 1-deoxy-D-xylulose-5-phosphate (DXP) to 2-C-methyl-D-erythritol 4-phosphate (MEP). This chain is 1-deoxy-D-xylulose 5-phosphate reductoisomerase, found in Cereibacter sphaeroides (strain ATCC 17023 / DSM 158 / JCM 6121 / CCUG 31486 / LMG 2827 / NBRC 12203 / NCIMB 8253 / ATH 2.4.1.) (Rhodobacter sphaeroides).